The primary structure comprises 74 residues: MGSFSIWHWLIVLLIVVLVFGTKKLRNLGSDLGGAVKGFREGVKSADEEEISAHNHTEARIIDADIKDKAQSKS.

The helical transmembrane segment at 1-21 (MGSFSIWHWLIVLLIVVLVFG) threads the bilayer.

Belongs to the TatA/E family. The Tat system comprises two distinct complexes: a TatABC complex, containing multiple copies of TatA, TatB and TatC subunits, and a separate TatA complex, containing only TatA subunits. Substrates initially bind to the TatABC complex, which probably triggers association of the separate TatA complex to form the active translocon.

It is found in the cell inner membrane. Part of the twin-arginine translocation (Tat) system that transports large folded proteins containing a characteristic twin-arginine motif in their signal peptide across membranes. TatA could form the protein-conducting channel of the Tat system. The polypeptide is Sec-independent protein translocase protein TatA (Nitrosospira multiformis (strain ATCC 25196 / NCIMB 11849 / C 71)).